The primary structure comprises 591 residues: F420 non-reducing hydrogenase II large subunit (591 aa).

Glutamate 42 is a Mg(2+) binding site. 4 residues coordinate Ni(2+): cysteine 61, cysteine 64, cysteine 569, and cysteine 572. Cysteine 64 serves as a coordination point for Fe cation. Cysteine 572 is a binding site for Fe cation. Histidine 575 contacts Mg(2+).

Belongs to the [NiFe]/[NiFeSe] hydrogenase large subunit family. In terms of assembly, composed of a large subunit (VhtA), a small subunit (VhtG) and a cytochrome subunit (VhtC). Ni(2+) serves as cofactor. Fe cation is required as a cofactor.

Its subcellular location is the cell membrane. The catalysed reaction is methanophenazine + H2 = dihydromethanophenazine. In terms of biological role, part of the F420 non-reducing hydrogenase II complex that catalyzes the reduction of methanophenazine to dihydromethanophenazine. This is F420 non-reducing hydrogenase II large subunit from Methanosarcina mazei (strain ATCC BAA-159 / DSM 3647 / Goe1 / Go1 / JCM 11833 / OCM 88) (Methanosarcina frisia).